A 370-amino-acid chain; its full sequence is Protein-tyrosine sulfotransferase 1 (370 aa).

Topologically, residues 1–8 (MVGKLKQN) are cytoplasmic. Residues 9–25 (LLLACLVISSVTVFYLG) traverse the membrane as a helical; Signal-anchor for type II membrane protein segment. The Lumenal segment spans residues 26–370 (QHAMECHHRI…KEKPQTEQVE (345 aa)). N-linked (GlcNAc...) asparagine glycosylation occurs at Asn60. 79–83 (RSGTT) serves as a coordination point for 3'-phosphoadenylyl sulfate. A disulfide bridge links Cys97 with Cys157. Catalysis depends on Glu100, which acts as the Proton donor/acceptor. Residues 102-106 (RVIPR) are interaction with peptide substrate. The 3'-phosphoadenylyl sulfate site is built by Arg184, Ser192, and Arg196. Cysteines 226 and 234 form a disulfide. A 3'-phosphoadenylyl sulfate-binding site is contributed by Tyr239. N-linked (GlcNAc...) asparagine glycosylation is present at Asn262. 3'-phosphoadenylyl sulfate contacts are provided by residues 286–295 (STDQVIKPVN) and Lys301.

The protein belongs to the protein sulfotransferase family. As to quaternary structure, homodimer. Can also form heterodimers with TPST2. Post-translationally, N-glycosylated. In terms of tissue distribution, ubiquitous. Detected in heart, brain, placenta, lung, liver, skeletal muscle, kidney and pancreas.

It is found in the golgi apparatus membrane. The enzyme catalyses L-tyrosyl-[protein] + 3'-phosphoadenylyl sulfate = O-sulfo-L-tyrosine-[protein] + adenosine 3',5'-bisphosphate + H(+). In terms of biological role, catalyzes the O-sulfation of tyrosine residues within acidic motifs of polypeptides, using 3'-phosphoadenylyl sulfate (PAPS) as cosubstrate. This chain is Protein-tyrosine sulfotransferase 1 (TPST1), found in Homo sapiens (Human).